A 190-amino-acid chain; its full sequence is Xanthine phosphoribosyltransferase (190 aa).

Xanthine-binding residues include L20 and N27. 129–133 (ANGAA) is a 5-phospho-alpha-D-ribose 1-diphosphate binding site. K157 contributes to the xanthine binding site.

This sequence belongs to the purine/pyrimidine phosphoribosyltransferase family. Xpt subfamily. Homodimer.

The protein resides in the cytoplasm. The enzyme catalyses XMP + diphosphate = xanthine + 5-phospho-alpha-D-ribose 1-diphosphate. Its pathway is purine metabolism; XMP biosynthesis via salvage pathway; XMP from xanthine: step 1/1. Converts the preformed base xanthine, a product of nucleic acid breakdown, to xanthosine 5'-monophosphate (XMP), so it can be reused for RNA or DNA synthesis. The chain is Xanthine phosphoribosyltransferase from Laribacter hongkongensis (strain HLHK9).